We begin with the raw amino-acid sequence, 78 residues long: MADDMERIFKRFDTNGDGKISLSELTDALRTLGSTSADEVQRMMAEIDTDGDGFIDFNEFISFCNANPGLMKDVAKVF.

EF-hand domains are found at residues 1 to 35 (MADD…LGST) and 35 to 70 (TSAD…NPGL). Residues Asp13, Asn15, Asp17, Lys19, Glu24, Asp48, Asp50, Asp52, and Glu59 each contribute to the Ca(2+) site.

Monomer. As to expression, specifically expressed in pollen.

Functionally, may be involved in the regulation of pollen-tube growth. In Phleum pratense (Common timothy), this protein is Polcalcin Phl p 7.